The sequence spans 159 residues: Transcriptional repressor NrdR (159 aa).

Residues 3–34 fold into a zinc finger; sequence CPFCRHDDTQVVDSRVSEDGAAIRRRRRCSAC. In terms of domain architecture, ATP-cone spans 49–139; it reads PFVVKKDGSR…VYRRFEDVSE (91 aa).

Belongs to the NrdR family. Requires Zn(2+) as cofactor.

Negatively regulates transcription of bacterial ribonucleotide reductase nrd genes and operons by binding to NrdR-boxes. The polypeptide is Transcriptional repressor NrdR (Burkholderia cenocepacia (strain ATCC BAA-245 / DSM 16553 / LMG 16656 / NCTC 13227 / J2315 / CF5610) (Burkholderia cepacia (strain J2315))).